The sequence spans 325 residues: Pyruvate dehydrogenase E1 component subunit beta (325 aa).

Glu-60 contacts thiamine diphosphate.

As to quaternary structure, heterodimer of an alpha and a beta chain. The cofactor is thiamine diphosphate.

It catalyses the reaction N(6)-[(R)-lipoyl]-L-lysyl-[protein] + pyruvate + H(+) = N(6)-[(R)-S(8)-acetyldihydrolipoyl]-L-lysyl-[protein] + CO2. In terms of biological role, the pyruvate dehydrogenase complex catalyzes the overall conversion of pyruvate to acetyl-CoA and CO(2). It contains multiple copies of three enzymatic components: pyruvate dehydrogenase (E1), dihydrolipoamide acetyltransferase (E2) and lipoamide dehydrogenase (E3). The sequence is that of Pyruvate dehydrogenase E1 component subunit beta (pdhB) from Staphylococcus aureus (strain COL).